The chain runs to 528 residues: G protein-coupled receptor 161 (528 aa).

The Extracellular segment spans residues 1–30; the sequence is MSLNSSLGHRKELSNLTEGASDQGGSGVTE. 2 N-linked (GlcNAc...) asparagine glycosylation sites follow: asparagine 4 and asparagine 15. A helical membrane pass occupies residues 31 to 51; it reads FVAIVIITVFVCLGNLVIVIT. At 52–64 the chain is on the cytoplasmic side; that stretch reads LYRKSYLLTLSNK. The helical transmembrane segment at 65 to 85 threads the bilayer; it reads FVFSLTLSNFLLSVLVLPFVV. Topologically, residues 86–101 are extracellular; that stretch reads TSSIRREWIFGVVWCN. An intrachain disulfide couples cysteine 100 to cysteine 178. Residue asparagine 101 is glycosylated (N-linked (GlcNAc...) asparagine). Residues 102–122 traverse the membrane as a helical segment; that stretch reads FSALLYLLISSASMLTLGIIA. Topologically, residues 123–143 are cytoplasmic; that stretch reads VDRYYAVLYPMAYPMKITGNR. The chain crosses the membrane as a helical span at residues 144–164; that stretch reads AVMVLAYIWLHSLIGCLPPLF. Over 165-190 the chain is Extracellular; sequence GWSSVEFDEFKWMCVAAWHREPGYTA. A helical transmembrane segment spans residues 191-211; that stretch reads FWQIWCALLPFLVMLVCYGFI. At 212–269 the chain is on the cytoplasmic side; the sequence is FRVARVKARKVHCGAVVTVEVGVQRTGRKNSSTSTSSSGSRKSAFQGVVYSANQCKAL. A helical membrane pass occupies residues 270–290; it reads VTILVVIGAFMVTWGPYMVVI. Topologically, residues 291-306 are extracellular; it reads TSEALWGKNCVSPTLE. The chain crosses the membrane as a helical span at residues 307 to 327; the sequence is TWATWLSFTSAICHPLIYGLW. Residues 328-528 are Cytoplasmic-facing; sequence NKTVRKELLG…EGDVLATEQR (201 aa).

This sequence belongs to the G-protein coupled receptor 1 family.

The protein localises to the cell projection. It is found in the cilium membrane. The protein resides in the cell membrane. In terms of biological role, key negative regulator of Shh signaling, which promotes the processing of GLI3 into GLI3R during neural tube development. Recruited by TULP3 and the IFT-A complex to primary cilia and acts as a regulator of the PKA-dependent basal repression machinery in Shh signaling by increasing cAMP levels, leading to promote the PKA-dependent processing of GLI3 into GLI3R and repress the Shh signaling. In presence of SHH, it is removed from primary cilia and is internalized into recycling endosomes, preventing its activity and allowing activation of the Shh signaling. Its ligand is unknown. This is G protein-coupled receptor 161 (GPR161) from Bos taurus (Bovine).